The sequence spans 142 residues: Nucleoside diphosphate kinase (142 aa).

Residues Lys-11, Phe-59, Arg-87, Thr-93, Arg-104, and Asn-114 each contribute to the ATP site. Catalysis depends on His-117, which acts as the Pros-phosphohistidine intermediate.

The protein belongs to the NDK family. Homotetramer. It depends on Mg(2+) as a cofactor.

It localises to the cytoplasm. It carries out the reaction a 2'-deoxyribonucleoside 5'-diphosphate + ATP = a 2'-deoxyribonucleoside 5'-triphosphate + ADP. It catalyses the reaction a ribonucleoside 5'-diphosphate + ATP = a ribonucleoside 5'-triphosphate + ADP. In terms of biological role, major role in the synthesis of nucleoside triphosphates other than ATP. The ATP gamma phosphate is transferred to the NDP beta phosphate via a ping-pong mechanism, using a phosphorylated active-site intermediate. In Aeromonas hydrophila subsp. hydrophila (strain ATCC 7966 / DSM 30187 / BCRC 13018 / CCUG 14551 / JCM 1027 / KCTC 2358 / NCIMB 9240 / NCTC 8049), this protein is Nucleoside diphosphate kinase.